The following is a 207-amino-acid chain: Superoxide dismutase [Mn] (207 aa).

The Mn(2+) site is built by H30, H78, D166, and H170.

It belongs to the iron/manganese superoxide dismutase family. Homodimer. It depends on Mn(2+) as a cofactor.

It carries out the reaction 2 superoxide + 2 H(+) = H2O2 + O2. In terms of biological role, destroys superoxide anion radicals which are normally produced within the cells and which are toxic to biological systems. In Chlamydia pneumoniae (Chlamydophila pneumoniae), this protein is Superoxide dismutase [Mn] (sodA).